The primary structure comprises 362 residues: NAD(P)H-quinone oxidoreductase subunit 1, chloroplastic (362 aa).

Helical transmembrane passes span 27–47 (IWIL…LVIV), 103–123 (IAVI…HFVL), 128–148 (IGVF…LMAG), 164–184 (AAQS…ISLL), 202–222 (FFGW…ISSL), 247–267 (YSGI…LVSS), 303–323 (VIGI…SITI), and 342–362 (FLLP…LVSL).

It belongs to the complex I subunit 1 family. As to quaternary structure, NDH is composed of at least 16 different subunits, 5 of which are encoded in the nucleus.

The protein resides in the plastid. Its subcellular location is the chloroplast thylakoid membrane. It catalyses the reaction a plastoquinone + NADH + (n+1) H(+)(in) = a plastoquinol + NAD(+) + n H(+)(out). The enzyme catalyses a plastoquinone + NADPH + (n+1) H(+)(in) = a plastoquinol + NADP(+) + n H(+)(out). In terms of biological role, NDH shuttles electrons from NAD(P)H:plastoquinone, via FMN and iron-sulfur (Fe-S) centers, to quinones in the photosynthetic chain and possibly in a chloroplast respiratory chain. The immediate electron acceptor for the enzyme in this species is believed to be plastoquinone. Couples the redox reaction to proton translocation, and thus conserves the redox energy in a proton gradient. In Saccharum hybrid (Sugarcane), this protein is NAD(P)H-quinone oxidoreductase subunit 1, chloroplastic.